The sequence spans 207 residues: MLRSLVQNPKVRARVLERVDEFRLNNLSNEEVWFRELTLCLLTANSSFISAYQALNCLGQKIYYANEEEIRNILKSCKYRFYNLKAKYIIMAREKVYGRLKEEIKPLADEDQQLARERLLNIKGIGMKEASHFLRNVGYFDLAIIDRHIIDFMRRIGAIGETNVKQLSKSLYISFENILKSIASNLNMSVGILDLFIWYKETNTIVK.

Residues K128 and D146 contribute to the active site.

The protein belongs to the type-2 OGG1 family.

It catalyses the reaction 2'-deoxyribonucleotide-(2'-deoxyribose 5'-phosphate)-2'-deoxyribonucleotide-DNA = a 3'-end 2'-deoxyribonucleotide-(2,3-dehydro-2,3-deoxyribose 5'-phosphate)-DNA + a 5'-end 5'-phospho-2'-deoxyribonucleoside-DNA + H(+). Catalyzes the excision of an oxidatively damaged form of guanine (7,8-dihydro-8-oxoguanine = 8-oxoG) from DNA. Also cleaves the DNA backbone at apurinic/apyrimidinic sites (AP sites). The chain is 8-oxoguanine DNA glycosylase/AP lyase from Saccharolobus solfataricus (strain ATCC 35092 / DSM 1617 / JCM 11322 / P2) (Sulfolobus solfataricus).